We begin with the raw amino-acid sequence, 592 residues long: Dictomallein-1 (592 aa).

The signal sequence occupies residues 1–19 (MKILIILLVFLNLITNINC). Positions 140–402 (PNIGHETNLN…QNYFKDSIIY (263 aa)) constitute a Peptidase M66 domain. A Zn(2+)-binding site is contributed by His-294. Glu-295 is a catalytic residue. 2 residues coordinate Zn(2+): His-298 and His-304.

Belongs to the dictomallein family. Zn(2+) serves as cofactor.

It is found in the secreted. The chain is Dictomallein-1 (dtmlA) from Dictyostelium discoideum (Social amoeba).